Here is a 216-residue protein sequence, read N- to C-terminus: tRNA (guanine-N(7)-)-methyltransferase (216 aa).

Positions 44, 69, 96, and 118 each coordinate S-adenosyl-L-methionine. Aspartate 118 is a catalytic residue. Lysine 122 serves as a coordination point for substrate. The tract at residues 124 to 129 is interaction with RNA; it reads RHEKRR. Residues aspartate 154 and 191-194 contribute to the substrate site; that span reads TEYE.

It belongs to the class I-like SAM-binding methyltransferase superfamily. TrmB family.

The catalysed reaction is guanosine(46) in tRNA + S-adenosyl-L-methionine = N(7)-methylguanosine(46) in tRNA + S-adenosyl-L-homocysteine. It participates in tRNA modification; N(7)-methylguanine-tRNA biosynthesis. In terms of biological role, catalyzes the formation of N(7)-methylguanine at position 46 (m7G46) in tRNA. This chain is tRNA (guanine-N(7)-)-methyltransferase, found in Geobacillus thermodenitrificans (strain NG80-2).